A 59-amino-acid chain; its full sequence is Large ribosomal subunit protein uL30 (59 aa).

This sequence belongs to the universal ribosomal protein uL30 family. Part of the 50S ribosomal subunit.

The chain is Large ribosomal subunit protein uL30 from Alkaliphilus oremlandii (strain OhILAs) (Clostridium oremlandii (strain OhILAs)).